We begin with the raw amino-acid sequence, 155 residues long: Small ribosomal subunit protein uS7cz/uS7cy (155 aa).

The protein belongs to the universal ribosomal protein uS7 family. Part of the 30S ribosomal subunit.

Its subcellular location is the plastid. It is found in the chloroplast. Its function is as follows. One of the primary rRNA binding proteins, it binds directly to 16S rRNA where it nucleates assembly of the head domain of the 30S subunit. In Lemna minor (Common duckweed), this protein is Small ribosomal subunit protein uS7cz/uS7cy (rps7-A).